We begin with the raw amino-acid sequence, 831 residues long: Multiphosphoryl transfer protein (831 aa).

The HPr domain occupies 1 to 90 (MLTIQFLCPL…EYIQVRFIDS (90 aa)). The Pros-phosphohistidine intermediate; for HPr activity role is filled by His15. His15 carries the post-translational modification Phosphohistidine; by EI. Positions 119-650 (GNVLASGVGV…AVKSQLRQLD (532 aa)) are PTS EI. His298 (tele-phosphohistidine intermediate; for PTS EI activity) is an active-site residue. His298 carries the post-translational modification Phosphohistidine; by autocatalysis. 2 residues coordinate phosphoenolpyruvate: Arg405 and Arg441. Positions 540 and 564 each coordinate Mg(2+). Residues 563–564 (ND) and Arg574 contribute to the phosphoenolpyruvate site. The Proton donor; for EI activity role is filled by Cys611. In terms of domain architecture, PTS EIIA type-2 spans 685–828 (PLLALENIFV…QSILTLLETE (144 aa)). His747 (tele-phosphohistidine intermediate; for PTS EIIA activity) is an active-site residue. Position 747 is a phosphohistidine; by HPr (His747).

This sequence belongs to the PEP-utilizing enzyme family. The cofactor is Mg(2+).

It localises to the cytoplasm. The enzyme catalyses L-histidyl-[protein] + phosphoenolpyruvate = N(pros)-phospho-L-histidyl-[protein] + pyruvate. The catalysed reaction is D-fructose(out) + N(pros)-phospho-L-histidyl-[protein] = D-fructose 1-phosphate(in) + L-histidyl-[protein]. Its function is as follows. Multifunctional protein that includes general (non sugar-specific) and sugar-specific components of the phosphoenolpyruvate-dependent sugar phosphotransferase system (sugar PTS). This major carbohydrate active transport system catalyzes the phosphorylation of incoming sugar substrates concomitantly with their translocation across the cell membrane. The enzyme II FryABC PTS system is involved in fructose transport. This chain is Multiphosphoryl transfer protein (fryA), found in Escherichia coli O157:H7.